The sequence spans 540 residues: Chaperonin GroEL (540 aa).

Residues 30-33 (TLGP), Lys-51, 87-91 (DGTTT), Gly-415, 479-481 (NAA), and Asp-495 contribute to the ATP site.

Belongs to the chaperonin (HSP60) family. As to quaternary structure, forms a cylinder of 14 subunits composed of two heptameric rings stacked back-to-back. Interacts with the co-chaperonin GroES.

It localises to the cytoplasm. The enzyme catalyses ATP + H2O + a folded polypeptide = ADP + phosphate + an unfolded polypeptide.. Functionally, together with its co-chaperonin GroES, plays an essential role in assisting protein folding. The GroEL-GroES system forms a nano-cage that allows encapsulation of the non-native substrate proteins and provides a physical environment optimized to promote and accelerate protein folding. This is Chaperonin GroEL from Pluralibacter gergoviae (Enterobacter gergoviae).